A 198-amino-acid polypeptide reads, in one-letter code: Putative Do-like 15 protein (198 aa).

The interval 48-198 (KIFSFSREPN…VFENDSPSDK (151 aa)) is serine protease. Active-site charge relay system residues include histidine 86 and serine 175.

This sequence belongs to the peptidase S1B family.

This is Putative Do-like 15 protein (DEGP15) from Arabidopsis thaliana (Mouse-ear cress).